A 355-amino-acid chain; its full sequence is Protein-glutamate methylesterase/protein-glutamine glutaminase 3 (355 aa).

Positions 8 to 123 (SVLIVDDSGM…AREVEDFVDK (116 aa)) constitute a Response regulatory domain. Asp-59 is modified (4-aspartylphosphate). Positions 139–161 (RSAPAAGPTPVPQAPPPPAAPPA) are disordered. The segment covering 145-159 (GPTPVPQAPPPPAAP) has biased composition (pro residues). Positions 160-350 (PAGDGGIIAI…ASLLEITGAS (191 aa)) constitute a CheB-type methylesterase domain. Catalysis depends on residues Ser-172, His-199, and Asp-292.

This sequence belongs to the CheB family. In terms of processing, phosphorylated by CheA. Phosphorylation of the N-terminal regulatory domain activates the methylesterase activity.

The protein resides in the cytoplasm. The enzyme catalyses [protein]-L-glutamate 5-O-methyl ester + H2O = L-glutamyl-[protein] + methanol + H(+). It catalyses the reaction L-glutaminyl-[protein] + H2O = L-glutamyl-[protein] + NH4(+). Involved in chemotaxis. Part of a chemotaxis signal transduction system that modulates chemotaxis in response to various stimuli. Catalyzes the demethylation of specific methylglutamate residues introduced into the chemoreceptors (methyl-accepting chemotaxis proteins or MCP) by CheR. Also mediates the irreversible deamidation of specific glutamine residues to glutamic acid. The sequence is that of Protein-glutamate methylesterase/protein-glutamine glutaminase 3 from Paramagnetospirillum magneticum (strain ATCC 700264 / AMB-1) (Magnetospirillum magneticum).